The chain runs to 264 residues: Thymidylate synthase (264 aa).

R21 is a binding site for dUMP. H51 provides a ligand contact to (6R)-5,10-methylene-5,6,7,8-tetrahydrofolate. 126–127 is a dUMP binding site; the sequence is RR. Residue C146 is the Nucleophile of the active site. DUMP-binding positions include 166 to 169, N177, and 207 to 209; these read RSAD and HLY. D169 lines the (6R)-5,10-methylene-5,6,7,8-tetrahydrofolate pocket. (6R)-5,10-methylene-5,6,7,8-tetrahydrofolate is bound at residue A263.

This sequence belongs to the thymidylate synthase family. Bacterial-type ThyA subfamily. In terms of assembly, homodimer.

The protein resides in the cytoplasm. It carries out the reaction dUMP + (6R)-5,10-methylene-5,6,7,8-tetrahydrofolate = 7,8-dihydrofolate + dTMP. Its pathway is pyrimidine metabolism; dTTP biosynthesis. Catalyzes the reductive methylation of 2'-deoxyuridine-5'-monophosphate (dUMP) to 2'-deoxythymidine-5'-monophosphate (dTMP) while utilizing 5,10-methylenetetrahydrofolate (mTHF) as the methyl donor and reductant in the reaction, yielding dihydrofolate (DHF) as a by-product. This enzymatic reaction provides an intracellular de novo source of dTMP, an essential precursor for DNA biosynthesis. The polypeptide is Thymidylate synthase (Bartonella tribocorum (strain CIP 105476 / IBS 506)).